A 319-amino-acid polypeptide reads, in one-letter code: Olfactory receptor 51F1 (319 aa).

Topologically, residues 1–37 (MLQNQDTMEILSNSTSKFPTFLLTGIPGLESAHVWIS) are extracellular. The chain crosses the membrane as a helical span at residues 38-58 (IPFCCFYAIALSGNSVILFVI). Residues 59–75 (ITQQSLHEPMYYFLFRL) lie on the Cytoplasmic side of the membrane. Residues 76 to 96 (SATDLGLTVSSLSTTLGILWF) form a helical membrane-spanning segment. At 97–106 (EAREISLYSC) the chain is on the extracellular side. Cys106 and Cys188 are joined by a disulfide. The helical transmembrane segment at 107 to 127 (IVQMFFLHGFTFMESGVLVAT) threads the bilayer. Topologically, residues 128–149 (AFDRYVAICDPLRYTTILTNSR) are cytoplasmic. The chain crosses the membrane as a helical span at residues 150 to 170 (IIQMGLLMITRAIVLILPLLL). The Extracellular portion of the chain corresponds to 171-211 (LLKPLYFCRMNALSHSYCYHPDVIQLACSDIRANSICGLID). A helical membrane pass occupies residues 212–232 (LILTTGIDTPCIVLSYILIIH). The Cytoplasmic portion of the chain corresponds to 233–249 (SVLRIASPEEWHKVFST). The chain crosses the membrane as a helical span at residues 250 to 270 (CVSHVGAVAFFYIHMLSLSLV). Over 271 to 279 (YRYGRSAPR) the chain is Extracellular. A helical transmembrane segment spans residues 280 to 300 (VVHSVMANVYLLLPPVLNPII). Residues 301–319 (DSVKTKQIRKAMLSLLLTK) are Cytoplasmic-facing.

Belongs to the G-protein coupled receptor 1 family.

It is found in the cell membrane. Odorant receptor. The polypeptide is Olfactory receptor 51F1 (OR51F1) (Homo sapiens (Human)).